We begin with the raw amino-acid sequence, 132 residues long: Protein NrdI (132 aa).

Belongs to the NrdI family.

Its function is as follows. Probably involved in ribonucleotide reductase function. This Agrobacterium fabrum (strain C58 / ATCC 33970) (Agrobacterium tumefaciens (strain C58)) protein is Protein NrdI.